The primary structure comprises 378 residues: SWI/SNF-related matrix-associated actin-dependent regulator of chromatin subfamily B member 1 (378 aa).

Positions 1–106 (MIMALSKTFG…DEKYKAVSIS (106 aa)) are DNA-binding.

Belongs to the SNF5 family. In terms of assembly, component of the multiprotein chromatin-remodeling complexes SWI/SNF. Component of neural progenitors-specific chromatin remodeling complex (npBAF complex) and the neuron-specific chromatin remodeling complex (nBAF complex). Component of the BAF (SWI/SNF) chromatin remodeling complex. Component of the SWI/SNF-B (PBAF) chromatin remodeling complex. Binds to double-stranded DNA.

The protein resides in the nucleus. Its function is as follows. Involved in chromatin-remodeling. Core component of the BAF (SWI/SNF) complex. This ATP-dependent chromatin-remodeling complex plays important roles in cell proliferation and differentiation, in cellular antiviral activities and inhibition of tumor formation. Belongs to the neural progenitors-specific chromatin remodeling complex (npBAF complex) and the neuron-specific chromatin remodeling complex (nBAF complex) and may play a role in neural development. The sequence is that of SWI/SNF-related matrix-associated actin-dependent regulator of chromatin subfamily B member 1 (smarcb1) from Xenopus tropicalis (Western clawed frog).